A 501-amino-acid polypeptide reads, in one-letter code: LIM domain-containing protein HDR3 (501 aa).

The segment at 33 to 67 is disordered; it reads GEANRRRPRVTAGEETTLWEEPVRPKKEEPPRHNN. Over residues 53 to 67 the composition is skewed to basic and acidic residues; the sequence is EPVRPKKEEPPRHNN. UIM domains lie at 65–84 and 94–113; these read HNNE…DAKN and ENDE…NPYQ. Residues 131-191 enclose the LIM zinc-binding domain; that stretch reads RVCGGCKHEI…KLCYKELHHP (61 aa). Positions 429 to 448 are disordered; sequence YASSSSSSCRPPPSKKGGIS.

As to quaternary structure, interacts (via N-terminus) with GW6A (via C-terminus).

Ubiquitin receptor that functions as a positive regulator of grain size and weight. Functions in the same genetic pathway as GW6A to regulate grain size. Modulates grain size in a similar manner to GW6A, by altering cell proliferation in spikelet hulls. Interacts with and enhances the ubiquitination of GW6A. This stabilizes GW6A, delays protein degradation by the 26S proteasome and enhances GW6A histone acetyltransferase activity. This chain is LIM domain-containing protein HDR3, found in Oryza sativa subsp. japonica (Rice).